The primary structure comprises 326 residues: Protoheme IX farnesyltransferase (326 aa).

The next 8 helical transmembrane spans lie at 35–55 (LIPL…GWPL), 60–80 (LVCT…LNCL), 106–126 (SAFI…VSGV), 129–149 (LAAG…TALL), 157–177 (IVIG…AATG), 185–205 (WLFA…ALLL), 242–262 (GFGV…LLPF), and 283–303 (AKGL…LLIL).

The protein belongs to the UbiA prenyltransferase family. Protoheme IX farnesyltransferase subfamily.

It localises to the cell inner membrane. It catalyses the reaction heme b + (2E,6E)-farnesyl diphosphate + H2O = Fe(II)-heme o + diphosphate. The protein operates within porphyrin-containing compound metabolism; heme O biosynthesis; heme O from protoheme: step 1/1. Functionally, converts heme B (protoheme IX) to heme O by substitution of the vinyl group on carbon 2 of heme B porphyrin ring with a hydroxyethyl farnesyl side group. This chain is Protoheme IX farnesyltransferase, found in Parasynechococcus marenigrum (strain WH8102).